The chain runs to 300 residues: MIKTSWEGNCFLNFFNNKASIGNVDKTIFKSKSTSPYKLLKSTHDEEGRCILPVLHTAGGLVGGDLLQFEVNLEKNSKVLLTTSSAQKVYGSVGRSKINPKGSFSKQKNYIKILDNSHLEYLPQETIIFANGLYDQKFKVFISENSSFLFTDLIRLGRSSSGESIESGVFRSKLEIIRNNDLYDDWEYVDQIELSKASYEAKSGMDYMPVFGSLIWVCEKDFSKLKINNLVGNIKKFFKESDNHLSIGILENGISVRFLGSSSQEARKCFFCIWKQIRSVCGFCEPKYQGVWPLQDSMNY.

This sequence belongs to the UreD family. UreD, UreF and UreG form a complex that acts as a GTP-hydrolysis-dependent molecular chaperone, activating the urease apoprotein by helping to assemble the nickel containing metallocenter of UreC. The UreE protein probably delivers the nickel.

It is found in the cytoplasm. Required for maturation of urease via the functional incorporation of the urease nickel metallocenter. This chain is Urease accessory protein UreD, found in Prochlorococcus marinus (strain MIT 9312).